We begin with the raw amino-acid sequence, 481 residues long: MNILRRGRLGSNVKEDVMKFTTSLEFDKEIFESDILCDIAHTTMLVEQNVISEENGKKIIAELKKIAEQSMESLNLDPSLDDIHMVIESELIKELGEDVAGRMHTGRSRNDEVATDLRLSLRKKVLEIITHLIAMEKNMLRVSREHKETLTVGYTHLQQAQPVTFGHHILSHVSAIERDISRFFDTYNRINISPLGCGAMATTGFNLNRKRTQELLGFYDLIENSMDGVSSRDFVVETMANISMLGTNLSKICEELVVFSSAEFNTIEIANEYTSTSSIMPQKKNPDVAEITRAKLSTLNGELVTVLTIMKALPNTYNRDLQEISPHLWKSVYTLIDSIQMVDGMISTVKVNKERMKENAEKNYSTATELADTLVRECGIAFRMAHGIVGELVKRSIEEKVEIKEIILEVLEKNNLSLSQEKIDTALDPFENVKLRNVIGGPAPKEVERAISSFNEKISSHKEKLDEKIAEIESVKKNLLK.

Belongs to the lyase 1 family. Argininosuccinate lyase subfamily.

Its subcellular location is the cytoplasm. The catalysed reaction is 2-(N(omega)-L-arginino)succinate = fumarate + L-arginine. It functions in the pathway amino-acid biosynthesis; L-arginine biosynthesis; L-arginine from L-ornithine and carbamoyl phosphate: step 3/3. This is Argininosuccinate lyase from Methanococcus maripaludis (strain C6 / ATCC BAA-1332).